The primary structure comprises 447 residues: MKPVIALVGRPNVGKSTLFNRLTKSRDAIVADFAGLTRDRHYGNGKLGKHEYIVIDTGGFEPDASSGIYREMAKQTQQAVAEADVVIFVVDARAGLSAQDHDIANYLRRLGKPCLLVGNKAEGMREGVQLAEFYELGLGEVLPVSAAHGQGVRSMLESALDTLQLPEPEDEPEDGEDKPIRLAVAGRPNVGKSTLINTWLGEERLVAFDMPGTTRDAISVPFERNGQQFELIDTAGLRRKGKVFEAIEKFSVVKTLQAIESANVVLLLLDATQGVTDQDAHIAGYILESGRAVVLAVNKWDAVDDYGRQMLERSIETRLSFLKFASLHFISAKKRQGLGPLWTSIAQAHKAATCKMPTPVLTRLLLEAVQFQAPKRSGMFRPKMRYAHQGGMNPPVIVIHGNSLEHVTDAYKRFLEGRFRKEFDLVGTPLRIEMKTSRNPFAEDSDA.

EngA-type G domains lie at 3–167 and 180–353; these read PVIA…QLPE and IRLA…KAAT. Residues 9–16, 56–60, 119–122, 186–193, 233–237, and 298–301 contribute to the GTP site; these read GRPNVGKS, DTGGF, NKAE, DTAGL, and NKWD. The 86-residue stretch at 353–438 folds into the KH-like domain; the sequence is TCKMPTPVLT…PLRIEMKTSR (86 aa).

This sequence belongs to the TRAFAC class TrmE-Era-EngA-EngB-Septin-like GTPase superfamily. EngA (Der) GTPase family. In terms of assembly, associates with the 50S ribosomal subunit.

GTPase that plays an essential role in the late steps of ribosome biogenesis. The chain is GTPase Der from Paracidovorax citrulli (strain AAC00-1) (Acidovorax citrulli).